A 455-amino-acid polypeptide reads, in one-letter code: Argininosuccinate lyase (455 aa).

The protein belongs to the lyase 1 family. Argininosuccinate lyase subfamily.

It is found in the cytoplasm. The catalysed reaction is 2-(N(omega)-L-arginino)succinate = fumarate + L-arginine. It participates in amino-acid biosynthesis; L-arginine biosynthesis; L-arginine from L-ornithine and carbamoyl phosphate: step 3/3. The protein is Argininosuccinate lyase of Shewanella sp. (strain MR-4).